A 179-amino-acid polypeptide reads, in one-letter code: 3-hydroxyanthranilate 3,4-dioxygenase 2 (179 aa).

Arg-44 serves as a coordination point for O2. Positions 48, 60, and 99 each coordinate Fe cation. Glu-60 is a binding site for substrate. The substrate site is built by Arg-103 and Glu-113.

This sequence belongs to the 3-HAO family. Requires Fe(2+) as cofactor.

The protein resides in the cytoplasm. The enzyme catalyses 3-hydroxyanthranilate + O2 = (2Z,4Z)-2-amino-3-carboxymuconate 6-semialdehyde. The protein operates within cofactor biosynthesis; NAD(+) biosynthesis; quinolinate from L-kynurenine: step 3/3. In terms of biological role, catalyzes the oxidative ring opening of 3-hydroxyanthranilate to 2-amino-3-carboxymuconate semialdehyde, which spontaneously cyclizes to quinolinate. The polypeptide is 3-hydroxyanthranilate 3,4-dioxygenase 2 (bna1-2) (Aspergillus oryzae (strain ATCC 42149 / RIB 40) (Yellow koji mold)).